A 540-amino-acid polypeptide reads, in one-letter code: CUB domain-containing protein 2 (540 aa).

Positions 1 to 24 (MLAELGACLLLAMVLLDSDPGTQA) are cleaved as a signal peptide. Over 25–516 (MEGVKCGGVL…GTMVTQDTSD (492 aa)) the chain is Extracellular. Intrachain disulfides connect Cys-30–Cys-56, Cys-83–Cys-106, Cys-145–Cys-171, Cys-198–Cys-218, Cys-257–Cys-283, and Cys-314–Cys-336. CUB domains lie at 30-143 (CGGV…YQKD), 145-255 (CGGV…YFSG), and 257-373 (CQEV…YIGV). An N-linked (GlcNAc...) asparagine glycan is attached at Asn-40. Residue Asn-267 is glycosylated (N-linked (GlcNAc...) asparagine). N-linked (GlcNAc...) asparagine glycosylation is found at Asn-377, Asn-435, and Asn-436. Residues 517 to 537 (IVFLGLCILAGVLMIIAIVVL) traverse the membrane as a helical segment. The Cytoplasmic segment spans residues 538–540 (MLL).

Its subcellular location is the membrane. In Mus musculus (Mouse), this protein is CUB domain-containing protein 2 (Cdcp2).